A 128-amino-acid chain; its full sequence is Type-4 ice-structuring protein LS-12 (128 aa).

The signal sequence occupies residues 1–20 (MKFSLVATIVLLALAQGSFA). Glutamine 21 bears the Pyrrolidone carboxylic acid mark.

Belongs to the apolipoprotein A1/A4/E family.

The protein localises to the secreted. In terms of biological role, antifreeze proteins lower the blood freezing point. In Myoxocephalus octodecemspinosus (Longhorn sculpin), this protein is Type-4 ice-structuring protein LS-12.